Consider the following 1440-residue polypeptide: Genome polyprotein (1440 aa).

Residues 32 to 53 (GGNEGSIMWLASLAVVIACAGA) constitute a propeptide, ER anchor for the capsid protein C, removed in mature form by serine protease NS3. Residues 36-56 (GSIMWLASLAVVIACAGAMKL) traverse the membrane as a helical segment. Residues 57–180 (SNFQGKLLMT…ATRYLMKTEN (124 aa)) are Extracellular-facing. An N-linked (GlcNAc...) asparagine; by host glycan is attached at N68. A helical membrane pass occupies residues 181–201 (WIVRNPGYAFLAAILGWMLGS). At 202–207 (NNGQRR) the chain is on the cytoplasmic side. The helical transmembrane segment at 208-222 (WYFTILLLLVAPAYS) threads the bilayer. The Extracellular segment spans residues 223–674 (FNCLGMGNRD…QVFGGAFRTL (452 aa)). Cystine bridges form between C225–C252, C282–C338, C282–C343, C296–C327, C314–C338, and C314–C343. Residues 320-333 (DRGWGNGCGLFGKG) form a fusion peptide region. N-linked (GlcNAc...) asparagine; by host glycosylation is present at N376. Intrachain disulfides connect C412–C509 and C526–C557. The helical transmembrane segment at 675 to 695 (FGGMSWITQGLMGALLLWMGV) threads the bilayer. Topologically, residues 696–701 (NARDRS) are cytoplasmic. Residues 702–722 (IALAFLATGGVLVFLATNVHA) form a helical membrane-spanning segment. At 723–1147 (DTGCAIDITR…AFAEANSGGD (425 aa)) the chain is on the extracellular side. 6 disulfides stabilise this stretch: C726/C737, C777/C865, C901/C945, C1002/C1051, C1013/C1034, and C1035/C1038. Residues N852 and N929 are each glycosylated (N-linked (GlcNAc...) asparagine; by host). The chain crosses the membrane as a helical span at residues 1148–1168 (VLHLALIAVFKIQPAFLVMNM). Topologically, residues 1169–1178 (LSTRWTNQEN) are cytoplasmic. Residues 1179–1199 (VVLVLGAAFFHLASVDLQIGV) form a helical membrane-spanning segment. A topological domain (lumenal) is located at residue H1200. The helical transmembrane segment at 1201–1221 (GILNAAAIAWMIVRAITFPTT) threads the bilayer. Over 1222–1237 (SSVTMPVLALLTPGMR) the chain is Cytoplasmic. A helical membrane pass occupies residues 1238–1258 (ALYLDTYRIILLVIGICSLLQ). At 1259–1269 (ERKKTMAKKKG) the chain is on the lumenal side. A helical membrane pass occupies residues 1270 to 1290 (AVLLGLALTSTGWFSPTTIAA). The Cytoplasmic portion of the chain corresponds to 1291 to 1302 (GLMVCNPNKKRG). A helical transmembrane segment spans residues 1303–1323 (WPATEFLSAVGLMFAIVGGLA). Topologically, residues 1324 to 1326 (ELD) are lumenal. A helical membrane pass occupies residues 1327-1347 (IESMSIPFMLAGLMAVSYVVS). Residues 1348 to 1404 (GKATDMWLERAADISWEMDAAITGSSRRLDVKLDDDGDFHLIDDPGVPWKVWVLRMS) lie on the Cytoplasmic side of the membrane. The interval 1355-1394 (LERAADISWEMDAAITGSSRRLDVKLDDDGDFHLIDDPGV) is interacts with and activates NS3 protease. Residues 1405-1425 (CIGLAALTPWAIVPAAFGYWL) constitute an intramembrane region (helical). Residues 1426-1440 (TLKTTKRGGVFWDTP) are Cytoplasmic-facing.

In terms of assembly, homodimer. Interacts (via N-terminus) with host EXOC1 (via C-terminus); this interaction results in EXOC1 degradation through the proteasome degradation pathway. As to quaternary structure, forms heterodimers with envelope protein E in the endoplasmic reticulum and Golgi. Homodimer; in the endoplasmic reticulum and Golgi. Interacts with protein prM. Interacts with non-structural protein 1. In terms of assembly, homodimer; Homohexamer when secreted. Interacts with envelope protein E. NS1 interacts with NS4B. Interacts with host complement protein CFH; this interaction leads to the degradation of C3. As to quaternary structure, interacts (via N-terminus) with serine protease NS3. Forms a heterodimer with serine protease NS3. May form homooligomers. In terms of assembly, forms a heterodimer with NS2B. Interacts with non-structural protein 2A (via N-terminus). Interacts with NS4B. Interacts with unphosphorylated RNA-directed RNA polymerase NS5; this interaction stimulates RNA-directed RNA polymerase NS5 guanylyltransferase activity. Requires Mn(2+) as cofactor. Mg(2+) serves as cofactor. Specific enzymatic cleavages in vivo yield mature proteins. Cleavages in the lumen of endoplasmic reticulum are performed by host signal peptidase, whereas cleavages in the cytoplasmic side are performed by serine protease NS3. Signal cleavage at the 2K-4B site requires a prior NS3 protease-mediated cleavage at the 4A-2K site. Post-translationally, cleaved in post-Golgi vesicles by a host furin, releasing the mature small envelope protein M, and peptide pr. This cleavage is incomplete as up to 30% of viral particles still carry uncleaved prM. In terms of processing, N-glycosylated. N-glycosylated. The excreted form is glycosylated and this is required for efficient secretion of the protein from infected cells. Post-translationally, RNA-directed RNA polymerase NS5: Phosphorylated on serines residues. This phosphorylation may trigger NS5 nuclear localization.

Its subcellular location is the virion. It is found in the host nucleus. The protein localises to the host cytoplasm. The protein resides in the host perinuclear region. It localises to the secreted. Its subcellular location is the virion membrane. It is found in the host endoplasmic reticulum membrane. It catalyses the reaction Selective hydrolysis of -Xaa-Xaa-|-Yaa- bonds in which each of the Xaa can be either Arg or Lys and Yaa can be either Ser or Ala.. It carries out the reaction a ribonucleoside 5'-triphosphate + H2O = a ribonucleoside 5'-diphosphate + phosphate + H(+). The enzyme catalyses ATP + H2O = ADP + phosphate + H(+). Plays a role in virus budding by binding to the cell membrane and gathering the viral RNA into a nucleocapsid that forms the core of a mature virus particle. During virus entry, may induce genome penetration into the host cytoplasm after hemifusion induced by the surface proteins. Can migrate to the cell nucleus where it modulates host functions. Overcomes the anti-viral effects of host EXOC1 by sequestering and degrading the latter through the proteasome degradation pathway. Its function is as follows. Inhibits RNA silencing by interfering with host Dicer. Functionally, prevents premature fusion activity of envelope proteins in trans-Golgi by binding to envelope protein E at pH 6.0. After virion release in extracellular space, gets dissociated from E dimers. In terms of biological role, acts as a chaperone for envelope protein E during intracellular virion assembly by masking and inactivating envelope protein E fusion peptide. prM is the only viral peptide matured by host furin in the trans-Golgi network probably to avoid catastrophic activation of the viral fusion activity in acidic Golgi compartment prior to virion release. prM-E cleavage is inefficient, and many virions are only partially matured. These uncleaved prM would play a role in immune evasion. May play a role in virus budding. Exerts cytotoxic effects by activating a mitochondrial apoptotic pathway through M ectodomain. May display a viroporin activity. Its function is as follows. Binds to host cell surface receptor and mediates fusion between viral and cellular membranes. Envelope protein is synthesized in the endoplasmic reticulum in the form of heterodimer with protein prM. They play a role in virion budding in the ER, and the newly formed immature particle is covered with 60 spikes composed of heterodimer between precursor prM and envelope protein E. The virion is transported to the Golgi apparatus where the low pH causes dissociation of PrM-E heterodimers and formation of E homodimers. prM-E cleavage is inefficient, and many virions are only partially matured. These uncleaved prM would play a role in immune evasion. Functionally, involved in immune evasion, pathogenesis and viral replication. Once cleaved off the polyprotein, is targeted to three destinations: the viral replication cycle, the plasma membrane and the extracellular compartment. Essential for viral replication. Required for formation of the replication complex and recruitment of other non-structural proteins to the ER-derived membrane structures. Excreted as a hexameric lipoparticle that plays a role against host immune response. Antagonizing the complement function. Binds to the host macrophages and dendritic cells. Inhibits signal transduction originating from Toll-like receptor 3 (TLR3). In terms of biological role, component of the viral RNA replication complex that functions in virion assembly and antagonizes the host alpha/beta interferon antiviral response. Required cofactor for the serine protease function of NS3. May have membrane-destabilizing activity and form viroporins. Its function is as follows. Displays three enzymatic activities: serine protease, NTPase and RNA helicase. NS3 serine protease, in association with NS2B, performs its autocleavage and cleaves the polyprotein at dibasic sites in the cytoplasm: C-prM, NS2A-NS2B, NS2B-NS3, NS3-NS4A, NS4A-2K and NS4B-NS5. NS3 RNA helicase binds RNA and unwinds dsRNA in the 3' to 5' direction. Functionally, non-structural protein 4A: Regulates the ATPase activity of the NS3 helicase activity. NS4A allows NS3 helicase to conserve energy during unwinding. In terms of biological role, peptide 2k: Functions as a signal peptide for NS4B and is required for the interferon antagonism activity of the latter. Non-structural protein 4B: Induces the formation of ER-derived membrane vesicles where the viral replication takes place. Inhibits interferon (IFN)-induced host STAT1 phosphorylation and nuclear translocation, thereby preventing the establishment of cellular antiviral state by blocking the IFN-alpha/beta pathway. Inhibits STAT2 translocation in the nucleus after IFN-alpha treatment. Its function is as follows. RNA-directed RNA polymerase NS5: Replicates the viral (+) and (-) RNA genome. Performs the capping of genomes in the cytoplasm. NS5 methylates viral RNA cap at guanine N-7 and ribose 2'-O positions. Besides its role in RNA genome replication, also prevents the establishment of cellular antiviral state by blocking the interferon-alpha/beta (IFN-alpha/beta) signaling pathway. Inhibits host TYK2 and STAT2 phosphorylation, thereby preventing activation of JAK-STAT signaling pathway. In Japanese encephalitis virus (strain Nakayama) (JEV), this protein is Genome polyprotein.